The primary structure comprises 95 residues: Co-chaperonin GroES (95 aa).

Belongs to the GroES chaperonin family. As to quaternary structure, heptamer of 7 subunits arranged in a ring. Interacts with the chaperonin GroEL.

It localises to the cytoplasm. Its function is as follows. Together with the chaperonin GroEL, plays an essential role in assisting protein folding. The GroEL-GroES system forms a nano-cage that allows encapsulation of the non-native substrate proteins and provides a physical environment optimized to promote and accelerate protein folding. GroES binds to the apical surface of the GroEL ring, thereby capping the opening of the GroEL channel. This Vesicomyosocius okutanii subsp. Calyptogena okutanii (strain HA) protein is Co-chaperonin GroES.